A 245-amino-acid chain; its full sequence is Terpene cyclase prhH (245 aa).

Transmembrane regions (helical) follow at residues 17-37 (ILAISEVLKVVAAVGWSVNYI), 51-71 (IGILPLCCDIGWEFVYAWMFP), 76-96 (HWQGVVRVWFFLHSAVLLVTL), 113-133 (IVFIYIFVTLVFGAGQYALAA), 138-158 (ALGFHWGGALCQFLSSSCGIA), 170-190 (SYLIWFARAISTFAGFIKLCI), and 205-225 (PMCWFYIVTVLSFDAAYPFLY).

Belongs to the paxB family.

The protein resides in the membrane. It participates in secondary metabolite biosynthesis; terpenoid biosynthesis. In terms of biological role, terpene cyclase; part of the gene cluster that mediates the biosynthesis of paraherquonin, a meroterpenoid with a unique, highly congested hexacyclic molecular architecture. The first step of the pathway is the synthesis of 3,5-dimethylorsellinic acid (DMOA) by the polyketide synthase prhL. Synthesis of DMOA is followed by farnesylation by the prenyltransferase prhE, methylesterification by the methyl-transferase prhM, epoxidation of the prenyl chain by the flavin-dependent monooxygenase prhF, and cyclization of the farnesyl moiety by the terpene cyclase prhH, to yield the tetracyclic intermediate, protoaustinoid A. The short chain dehydrogenase prhI then oxidizes the C-3 alcohol group of the terpene cyclase product to transform protoaustinoid A into protoaustinoid B. The FAD-binding monooxygenase prhJ catalyzes the oxidation of protoaustinoid B into preaustinoid A which is further oxidized into preaustinoid A1 by FAD-binding monooxygenase phrK. Finally, prhA leads to berkeleydione via the berkeleyone B intermediate. PrhA is a multifunctional dioxygenase that first desaturates at C5-C6 to form berkeleyone B, followed by rearrangement of the A/B-ring to form the cycloheptadiene moiety in berkeleydione. Berkeleydione serves as the key intermediate for the biosynthesis of paraherquonin as well as many other meroterpenoids. The cytochrome P450 monooxygenases prhB, prhD, and prhN, as well as the isomerase prhC, are probably involved in the late stage of paraherquonin biosynthesis, after the production of berkeleydione. Especially prhC might be a multifunctional enzyme that catalyzes the D-ring expansion via intramolecular methoxy rearrangement, as well as the hydrolysis of the expanded D-ring. This is Terpene cyclase prhH from Penicillium brasilianum.